The following is a 63-amino-acid chain: Metallothionein-2 (63 aa).

This sequence belongs to the metallothionein superfamily. Type 6 family.

Its function is as follows. This protein binds cations of several transition elements. This Caenorhabditis elegans protein is Metallothionein-2 (mtl-2).